Here is a 185-residue protein sequence, read N- to C-terminus: UPF0397 protein AYWB_013 (185 aa).

5 helical membrane-spanning segments follow: residues 13-33 (IGLS…PVGF), 42-62 (AFLA…VGLI), 69-89 (FFLF…IGFI), 109-129 (IVYF…FFAP), and 148-168 (FLIV…LMTI).

It belongs to the UPF0397 family.

It localises to the cell membrane. This is UPF0397 protein AYWB_013 from Aster yellows witches'-broom phytoplasma (strain AYWB).